Reading from the N-terminus, the 465-residue chain is Antithrombin-III (465 aa).

Positions 1 to 32 (MISNGIGTVTAGKRSICLLPLLLIGLWGCVTC) are cleaved as a signal peptide. Disulfide bonds link Cys41–Cys161 and Cys54–Cys128. A Phosphothreonine modification is found at Thr64. The residue at position 69 (Ser69) is a Phosphoserine. Residue Trp82 coordinates heparin. The N-linked (GlcNAc...) asparagine glycan is linked to Asn129. Arg162 is a heparin binding site. Residue Asn168 is glycosylated (N-linked (GlcNAc...) asparagine). A heparin-binding site is contributed by Arg178. Asn188 and Asn225 each carry an N-linked (GlcNAc...) asparagine glycan. Cys280 and Cys463 are oxidised to a cystine.

The protein belongs to the serpin family. As to quaternary structure, forms protease inhibiting heterodimer with TMPRSS7. Post-translationally, phosphorylated by FAM20C in the extracellular medium. As to expression, plasma.

The protein resides in the secreted. It is found in the extracellular space. Its function is as follows. Most important serine protease inhibitor in plasma that regulates the blood coagulation cascade. AT-III inhibits thrombin, matriptase-3/TMPRSS7, as well as factors IXa, Xa and XIa. Its inhibitory activity is greatly enhanced in the presence of heparin. This is Antithrombin-III (SERPINC1) from Bos taurus (Bovine).